Consider the following 322-residue polypeptide: Cysteine protease YopT (322 aa).

Residues C139, H258, and D274 contribute to the active site.

This sequence belongs to the peptidase C58 family. In terms of assembly, interacts with human ARHA.

The protein resides in the secreted. In terms of biological role, cysteine protease, which is translocated into infected cells and plays a central role in pathogenesis by cleaving the C-terminus end of the human small GTPase RhoA/ARHA, a regulator of cytoskeleton. Once cleaved, ARHA loses its lipid modification, and is released from the cell membrane, leading to the subsequent disruption of actin cytoskeleton of the host cell. The sequence is that of Cysteine protease YopT (yopT) from Yersinia pestis.